Consider the following 542-residue polypeptide: Endonuclease 4 homolog (542 aa).

Disordered regions lie at residues 89-123 (NEEI…QTSI) and 141-234 (PFFS…ENKF). 2 stretches are compositionally biased toward low complexity: residues 99-115 (SKKL…QQSK) and 147-170 (NNAS…TTTT). A coiled-coil region spans residues 171-206 (TKKRNNKDEENEDDNEEEEEEEEEEEDKKSKKKTTT). The segment covering 179-196 (EENEDDNEEEEEEEEEEE) has biased composition (acidic residues). Low complexity predominate over residues 205–215 (TTTTTTTTTTA). The span at 216–227 (YKKKSSPKKKKV) shows a compositional bias: basic residues. The Nuclear localization signal signature appears at 222–227 (PKKKKV). Zn(2+)-binding residues include H328, H368, E404, D438, H441, H475, D488, H490, and E520.

The protein belongs to the AP endonuclease 2 family. Requires Zn(2+) as cofactor.

Its subcellular location is the nucleus. The enzyme catalyses Endonucleolytic cleavage to 5'-phosphooligonucleotide end-products.. Plays a role in DNA repair. It cleaves phosphodiester bonds at apurinic or apyrimidinic sites (AP sites) to produce new 5'-ends that are base-free deoxyribose 5-phosphate residues. In Dictyostelium discoideum (Social amoeba), this protein is Endonuclease 4 homolog (apnA).